The primary structure comprises 443 residues: Phosphoglucosamine mutase (443 aa).

S101 (phosphoserine intermediate) is an active-site residue. Mg(2+)-binding residues include S101, D240, D242, and D244. Position 101 is a phosphoserine (S101).

It belongs to the phosphohexose mutase family. Requires Mg(2+) as cofactor. Post-translationally, activated by phosphorylation.

The catalysed reaction is alpha-D-glucosamine 1-phosphate = D-glucosamine 6-phosphate. Its function is as follows. Catalyzes the conversion of glucosamine-6-phosphate to glucosamine-1-phosphate. This Psychromonas ingrahamii (strain DSM 17664 / CCUG 51855 / 37) protein is Phosphoglucosamine mutase.